The sequence spans 116 residues: uncharacterized protein (116 aa).

The N-acetylmuramoyl-L-alanine amidase domain occupies 2–73 (DGSVGTGRQV…PKALICGHRD (72 aa)).

The protein to phage T3 and T7 N-acetylmuramoyl-L-alanine amidases.

This is an uncharacterized protein from Haemophilus influenzae (strain ATCC 51907 / DSM 11121 / KW20 / Rd).